The sequence spans 395 residues: ATP synthase subunit beta, chloroplastic (395 aa).

72–79 (GGAGVGKT) contacts ATP.

This sequence belongs to the ATPase alpha/beta chains family. As to quaternary structure, F-type ATPases have 2 components, CF(1) - the catalytic core - and CF(0) - the membrane proton channel. CF(1) has five subunits: alpha(3), beta(3), gamma(1), delta(1), epsilon(1). CF(0) has four main subunits: a(1), b(1), b'(1) and c(9-12).

It is found in the plastid. Its subcellular location is the chloroplast thylakoid membrane. It catalyses the reaction ATP + H2O + 4 H(+)(in) = ADP + phosphate + 5 H(+)(out). Functionally, produces ATP from ADP in the presence of a proton gradient across the membrane. The catalytic sites are hosted primarily by the beta subunits. This is ATP synthase subunit beta, chloroplastic from Microlepia platyphylla (Plate fern).